Here is a 379-residue protein sequence, read N- to C-terminus: Glutamate 5-kinase (379 aa).

K15 is an ATP binding site. S56, D143, and N155 together coordinate substrate. Residue 175–176 coordinates ATP; the sequence is SD. Residues 281-358 enclose the PUA domain; that stretch reads KGTLTIDAGA…CDAAQILGIS (78 aa).

This sequence belongs to the glutamate 5-kinase family.

The protein resides in the cytoplasm. It carries out the reaction L-glutamate + ATP = L-glutamyl 5-phosphate + ADP. It participates in amino-acid biosynthesis; L-proline biosynthesis; L-glutamate 5-semialdehyde from L-glutamate: step 1/2. Its function is as follows. Catalyzes the transfer of a phosphate group to glutamate to form L-glutamate 5-phosphate. The protein is Glutamate 5-kinase of Nitrobacter hamburgensis (strain DSM 10229 / NCIMB 13809 / X14).